The sequence spans 639 residues: Lipoteichoic acid synthase 1 (639 aa).

Residues 1 to 3 (MKK) lie on the Cytoplasmic side of the membrane. The helical transmembrane segment at 4–24 (LFSYKLSFFVLAVILFWAKTY) threads the bilayer. Residues 25 to 41 (LSYKTEFNLGVKGTTQE) lie on the Extracellular side of the membrane. The helical transmembrane segment at 42–62 (ILLIFNPFSSAVFFLGLALLA) threads the bilayer. Residues 63 to 67 (KGRKS) lie on the Cytoplasmic side of the membrane. The helical transmembrane segment at 68–88 (AIIMLIIDFLMTFVLYANILF) threads the bilayer. At 89 to 116 (YRFFDDFLTFPNIKQSGNVGNMGDGIFS) the chain is on the extracellular side. Residues 117-137 (IMAGHDIFYFLDIIILIAVLI) form a helical membrane-spanning segment. The Cytoplasmic segment spans residues 138-150 (WRPELKEYKMKKR). The helical transmembrane segment at 151–171 (FASLVILSGIALFFINLHYAE) threads the bilayer. At 172–639 (KDRPQLLTRT…YHYGKEKEIK (468 aa)) the chain is on the extracellular side. Mn(2+) is bound by residues Glu252 and Thr297. Thr297 is a catalytic residue. A substrate-binding site is contributed by His413. Positions 472 and 473 each coordinate Mn(2+).

This sequence belongs to the LTA synthase family. Proteolytically cleaved by the type I signal peptidases SipT and SipV.

Its subcellular location is the cell membrane. It localises to the secreted. It participates in cell wall biogenesis; lipoteichoic acid biosynthesis. Catalyzes the polymerization of lipoteichoic acid (LTA) polyglycerol phosphate, a reaction that presumably uses phosphatidylglycerol (PG) as substrate. This is Lipoteichoic acid synthase 1 (ltaS1) from Bacillus subtilis (strain 168).